The primary structure comprises 148 residues: MPVVISEKQFNDAHQAFKLHDKKDEGAVSNKELTNLFKSLALHVSDDKLQQWVDEMDEDATGVIRWEKFKILFERKVQEDEDERELRSAFRVLDKNNQGVIDVEDLRWILKSLGDDLNDDEIQDMINETDTDGSGTVDYEEFSALMLG.

EF-hand domains are found at residues 8–43, 44–79, 81–116, and 117–148; these read KQFN…LALH, VSDD…KVQE, EDER…LGDD, and LNDD…LMLG. Aspartate 130, aspartate 132, serine 134, threonine 136, and glutamate 141 together coordinate Ca(2+).

Belongs to the troponin C family.

Functionally, troponin is the central regulatory protein of striated muscle contraction. Tn consists of three components: Tn-I which is the inhibitor of actomyosin ATPase, Tn-T which contains the binding site for tropomyosin and Tn-C. The binding of calcium to Tn-C abolishes the inhibitory action of Tn on actin filaments. The chain is Troponin C from Todarodes pacificus (Japanese flying squid).